Reading from the N-terminus, the 376-residue chain is Deoxyguanosinetriphosphate triphosphohydrolase-like protein (376 aa).

A disordered region spans residues 1 to 32 (MEPSFAPYAAHSSQTRGRVHREAPAAPRSEFQ). In terms of domain architecture, HD spans 65 to 196 (RLTHSIEVAQ…ANLADEIAYN (132 aa)).

This sequence belongs to the dGTPase family. Type 2 subfamily.

The protein is Deoxyguanosinetriphosphate triphosphohydrolase-like protein of Thiobacillus denitrificans (strain ATCC 25259 / T1).